A 108-amino-acid chain; its full sequence is ATP synthase epsilon chain (108 aa).

Belongs to the ATPase epsilon chain family. As to quaternary structure, F-type ATPases have 2 components, CF(1) - the catalytic core - and CF(0) - the membrane proton channel. CF(1) has five subunits: alpha(3), beta(3), gamma(1), delta(1), epsilon(1). CF(0) has three main subunits: a, b and c.

It is found in the cell inner membrane. Produces ATP from ADP in the presence of a proton gradient across the membrane. The sequence is that of ATP synthase epsilon chain from Rickettsia bellii (strain OSU 85-389).